A 95-amino-acid polypeptide reads, in one-letter code: Large ribosomal subunit protein bL25 (95 aa).

Belongs to the bacterial ribosomal protein bL25 family. As to quaternary structure, part of the 50S ribosomal subunit; part of the 5S rRNA/L5/L18/L25 subcomplex. Contacts the 5S rRNA. Binds to the 5S rRNA independently of L5 and L18.

In terms of biological role, this is one of the proteins that binds to the 5S RNA in the ribosome where it forms part of the central protuberance. This Shewanella putrefaciens (strain CN-32 / ATCC BAA-453) protein is Large ribosomal subunit protein bL25.